The primary structure comprises 461 residues: MLSLYYAINYKNRKMVERLLREGVHPDSTIKGFYRPLVKSILLRDVDLVSILLQNGANPNNINDETVSPLAIAIKVNSPTIVSLLLDYNADTSLFPLYVSFPIIKVLVYHGIDVNVIDRESRSFLHYAAKNDDVDTVISLILHGANVNVQDSKGLSPLHHAVSKKTTLTAKILLENGARVNIRDSLGRLPLHLGANTYEMVKLLIDYGSPIDIKDVNGSTPLHYAIWKSSLDTIRLLVNVSTINALDNNCNSPLHYIILSETEILVELLLRGADITIKDICGNTPLDILCKLRIKKLDNIKAIISNAFLMREVVPDLLKLCGFESNRKIISNISDLKQHEVSCIKEIHLMKEHSFRKNGPTILDVCTDKVHFLHRLVNARDNVQYKDFPIYCKYIKFRIEKAIYKKTIIEKTILLLDDILIKHEYTSWHDLPYELKHYIIEYINIEFIKSLLEHTNLKNKE.

ANK repeat units follow at residues 1–28 (MLSL…HPDS), 31–61 (KGFY…NPNN), 65–94 (ETVS…DTSL), 96–116 (PLYV…DVNV), 120–149 (ESRS…NVNV), 153–182 (KGLS…RVNI), 186–213 (LGRL…PIDI), 217–248 (NGST…ALDN), 250–277 (CNSP…DITI), 281–312 (CGNT…LMRE), 358–385 (NGPT…NVQY), and 431–460 (LPYE…LKNK).

The polypeptide is Putative ankyrin repeat protein FPV218 (Fowlpox virus (strain NVSL) (FPV)).